The primary structure comprises 243 residues: MNNLLLRSSADIIALVPAAGIGSRMNSDCPKQYLSIAGKTIIEHTLSALLDHPRIRHVVIVLNPTDTQFQSLEVVSDSRITTVTGGEQRADSVLAGLNHLAHVTGNDNCWVLVHDAARPCLHHDDLDRLLQLAEADEQGNMACGGILASPVRDTMKRGRVGQIIDHTVERQDLWHALTPQFFPLMLLRDCLSKALSQHANITDEASALEYCGYQPVLVNGRSDNIKVTCPEDLALAEFYLSRK.

This sequence belongs to the IspD/TarI cytidylyltransferase family. IspD subfamily. In terms of assembly, homodimer.

The catalysed reaction is 2-C-methyl-D-erythritol 4-phosphate + CTP + H(+) = 4-CDP-2-C-methyl-D-erythritol + diphosphate. It functions in the pathway isoprenoid biosynthesis; isopentenyl diphosphate biosynthesis via DXP pathway; isopentenyl diphosphate from 1-deoxy-D-xylulose 5-phosphate: step 2/6. Functionally, catalyzes the formation of 4-diphosphocytidyl-2-C-methyl-D-erythritol from CTP and 2-C-methyl-D-erythritol 4-phosphate (MEP). This is 2-C-methyl-D-erythritol 4-phosphate cytidylyltransferase from Photorhabdus laumondii subsp. laumondii (strain DSM 15139 / CIP 105565 / TT01) (Photorhabdus luminescens subsp. laumondii).